A 365-amino-acid chain; its full sequence is Serpentine receptor class epsilon-38 (365 aa).

The next 7 membrane-spanning stretches (helical) occupy residues 26-46 (GMYL…GVII), 65-85 (IMTA…LLII), 124-144 (ALVI…FGIL), 168-188 (IPVF…YFVL), 196-216 (LGTS…LAVW), 256-276 (LVIV…CLVI), and 285-305 (IFIH…CSTL).

It belongs to the nematode receptor-like protein sre family.

It localises to the membrane. The chain is Serpentine receptor class epsilon-38 (sre-38) from Caenorhabditis elegans.